We begin with the raw amino-acid sequence, 429 residues long: D-amino acid dehydrogenase (429 aa).

3-17 (VLILGSGVIGTTTAW) is an FAD binding site.

Belongs to the DadA oxidoreductase family. FAD serves as cofactor.

The enzyme catalyses a D-alpha-amino acid + A + H2O = a 2-oxocarboxylate + AH2 + NH4(+). It participates in amino-acid degradation; D-alanine degradation; NH(3) and pyruvate from D-alanine: step 1/1. In terms of biological role, oxidative deamination of D-amino acids. This is D-amino acid dehydrogenase from Xanthomonas campestris pv. campestris (strain 8004).